Here is a 400-residue protein sequence, read N- to C-terminus: MSNETNANSTDSRQGVTNIGSVPAYLVLADGRTFKGFGFGAIGTTLGEAVFTTAMTGYQETMTDPSYHRQIVVATAPQIGNTGWNEEDNESHDGSIWVAGLVIRDLAVRVSNWRATTTLQEEMAKQGVVGIGGIDTRALVRHIRNEGAVPAGIFSGADAERPIEELVEIVKSQPSMVGANLAVEVSVDKPYVIEAEGEARHTVVAYDLGIKQNTPRRFAARGVRTVIVPAETPFEEIKQYNPSGVFISNGPGDPAAADIMVNIVREVLAADIPFFGICFGNQILGRAFGMETYKLKFGHRGINVPVKNHITGKIDITAQNHGFALKGEAGQEFETDFGTAVVTHTCLNDGVVEGVALKSGRAYSVQYHPEAAAGPNDASPLFDQFVALMDEDSENQKEEA.

The CPSase stretch occupies residues 1-199 (MSNETNANST…PYVIEAEGEA (199 aa)). L-glutamine contacts are provided by Ser66, Gly250, and Gly252. The Glutamine amidotransferase type-1 domain maps to 200-395 (RHTVVAYDLG…VALMDEDSEN (196 aa)). Cys278 (nucleophile) is an active-site residue. L-glutamine is bound by residues Phe279, Gln282, Asn320, Gly322, and Phe323. Catalysis depends on residues His368 and Glu370.

It belongs to the CarA family. In terms of assembly, composed of two chains; the small (or glutamine) chain promotes the hydrolysis of glutamine to ammonia, which is used by the large (or ammonia) chain to synthesize carbamoyl phosphate. Tetramer of heterodimers (alpha,beta)4.

It carries out the reaction hydrogencarbonate + L-glutamine + 2 ATP + H2O = carbamoyl phosphate + L-glutamate + 2 ADP + phosphate + 2 H(+). The catalysed reaction is L-glutamine + H2O = L-glutamate + NH4(+). Its pathway is amino-acid biosynthesis; L-arginine biosynthesis; carbamoyl phosphate from bicarbonate: step 1/1. The protein operates within pyrimidine metabolism; UMP biosynthesis via de novo pathway; (S)-dihydroorotate from bicarbonate: step 1/3. Its function is as follows. Small subunit of the glutamine-dependent carbamoyl phosphate synthetase (CPSase). CPSase catalyzes the formation of carbamoyl phosphate from the ammonia moiety of glutamine, carbonate, and phosphate donated by ATP, constituting the first step of 2 biosynthetic pathways, one leading to arginine and/or urea and the other to pyrimidine nucleotides. The small subunit (glutamine amidotransferase) binds and cleaves glutamine to supply the large subunit with the substrate ammonia. The sequence is that of Carbamoyl phosphate synthase small chain from Corynebacterium efficiens (strain DSM 44549 / YS-314 / AJ 12310 / JCM 11189 / NBRC 100395).